The chain runs to 211 residues: Ribosomal RNA small subunit methyltransferase G (211 aa).

Residues Gly74, Leu79, 125–126 (AE), and Arg140 each bind S-adenosyl-L-methionine.

The protein belongs to the methyltransferase superfamily. RNA methyltransferase RsmG family.

It localises to the cytoplasm. Functionally, specifically methylates the N7 position of guanine in position 518 of 16S rRNA. The sequence is that of Ribosomal RNA small subunit methyltransferase G from Clavibacter sepedonicus (Clavibacter michiganensis subsp. sepedonicus).